The primary structure comprises 69 residues: Alpha-conotoxin SrIA/SrIB (69 aa).

Residues 1–21 form the signal peptide; the sequence is MGMRMMFTVFLLVVLATTVVS. Positions 22 to 48 are excised as a propeptide; sequence FTSDSAFDSRNVAANDKVSDMIALTAR. Disulfide bonds link C51/C57 and C52/C65. The interval 53 to 55 is ser-Xaa-Pro motif, crucial for potent interaction with nAChR; sequence SRP. P55 is subject to 4-hydroxyproline; in form Sr1A and Sr1B. At E60 the chain carries 4-carboxyglutamate; in form Sr1A. Residue E63 is modified to 4-carboxyglutamate; in form Sr1A and Sr1B. A Glycine amide; in form Sr1A and Sr1B modification is found at G66.

This sequence belongs to the conotoxin A superfamily. In terms of processing, occurs in 2 forms which differ in the post-translational modification of Glu-60. In form SrA1 Glu-60 is 4-carboxyglutamate while in form SrA2 Glu-60 is unmodified. In terms of tissue distribution, expressed by the venom duct.

The protein localises to the secreted. Its function is as follows. Alpha-conotoxins act on postsynaptic membranes, they bind to the nicotinic acetylcholine receptors (nAChR) and thus inhibit them. Has weak blocking effects on muscle nAChR composed of alpha-1/beta-1/gamma/delta subunits and the central nervous system nAChR composed of alpha-4/beta-2 subunits. Does not detectably affect the peripheral nervous system nAChR composed of alpha-3/beta-4 subunits. Low toxin concentrations potentiate currents in muscle nAChR composed of alpha-1/beta-1/gamma/delta subunits and central nervous system nAChR composed of alpha-4/beta-2 subunits, but not the peripheral nervous system nAChR composed of alpha-3/beta-4 subunits. The sequence is that of Alpha-conotoxin SrIA/SrIB from Conus spurius (Alphabet cone).